The sequence spans 143 residues: Transcriptional regulator MraZ (143 aa).

SpoVT-AbrB domains are found at residues 5 to 47 (TFTP…PKAE) and 76 to 119 (ADEQ…DAES).

The protein belongs to the MraZ family. Forms oligomers.

It localises to the cytoplasm. Its subcellular location is the nucleoid. The polypeptide is Transcriptional regulator MraZ (Corynebacterium jeikeium (strain K411)).